The primary structure comprises 350 residues: D-guloside 3-dehydrogenase (350 aa).

Belongs to the zinc-containing alcohol dehydrogenase family. Zn(2+) is required as a cofactor.

It carries out the reaction a D-guloside + NAD(+) = a 3-dehydro-D-guloside + NADH + H(+). Functionally, catalyzes the NAD(+)-dependent oxidation of the hydroxyl group at C3 of D-gulosides leading to 3-dehydro-D-gulosides. Probably functions in a metabolic pathway that transforms D-gulosides to D-glucosides. Is also able to catalyze the reverse reactions, i.e. the NADH-dependent reduction of the oxo group at C3 of 3-dehydro-D-gulosides leading to D-gulosides. In vitro, can oxidize D-gulose and methyl beta-D-guloside, and reduce methyl alpha-3-dehydro-D-guloside and methyl beta-3-dehydro-D-guloside. However, the actual specific physiological substrates for this metabolic pathway are unknown. The protein is D-guloside 3-dehydrogenase (ycjQ) of Escherichia coli (strain K12).